The following is a 217-amino-acid chain: Probable cutinase 3 (217 aa).

Residues 1–17 (MSLRSLFVAGLATLALA) form the signal peptide. 2 cysteine pairs are disulfide-bonded: Cys-39–Cys-118 and Cys-65–Cys-79. Residue Ser-129 is the Nucleophile of the active site. Cys-180 and Cys-187 are oxidised to a cystine. Asp-184 is a catalytic residue. His-197 functions as the Proton donor/acceptor in the catalytic mechanism.

It belongs to the cutinase family.

The protein resides in the secreted. It carries out the reaction cutin + H2O = cutin monomers.. Catalyzes the hydrolysis of complex carboxylic polyesters found in the cell wall of plants. Degrades cutin, a macromolecule that forms the structure of the plant cuticle. The chain is Probable cutinase 3 from Aspergillus fumigatus (strain CBS 144.89 / FGSC A1163 / CEA10) (Neosartorya fumigata).